The chain runs to 407 residues: Aminoacylase-1 (407 aa).

Alanine 2 is modified (N-acetylalanine). Histidine 80 is a binding site for Zn(2+). The active site involves aspartate 82. Aspartate 113 lines the Zn(2+) pocket. Glutamate 147 acts as the Proton acceptor in catalysis. The Zn(2+) site is built by glutamate 148, glutamate 175, and histidine 372.

The protein belongs to the peptidase M20A family. Homodimer. Interacts with SPHK1. It depends on Zn(2+) as a cofactor.

It is found in the cytoplasm. The catalysed reaction is an N-acyl-L-amino acid + H2O = an L-alpha-amino acid + a carboxylate. The enzyme catalyses N-acetyl-L-methionine + H2O = L-methionine + acetate. It carries out the reaction N-acetyl-L-glutamine + H2O = L-glutamine + acetate. Functionally, catalyzes the hydrolysis of N-acetylated amino acids to acetate and free amino acids. The sequence is that of Aminoacylase-1 (ACY1) from Sus scrofa (Pig).